The sequence spans 160 residues: Leptin (160 aa).

An N-terminal signal peptide occupies residues 1 to 17 (MDYTLALALSLLQLSMC). Cysteines 109 and 160 form a disulfide.

The protein belongs to the leptin family.

Its subcellular location is the secreted. Its function is as follows. May function as part of a signaling pathway that acts to regulate the size of the body fat depot. The chain is Leptin (lep) from Tetraodon nigroviridis (Spotted green pufferfish).